The chain runs to 258 residues: UPF0246 protein CGSHiGG_08495 (258 aa).

This sequence belongs to the UPF0246 family.

This Haemophilus influenzae (strain PittGG) protein is UPF0246 protein CGSHiGG_08495.